Here is a 561-residue protein sequence, read N- to C-terminus: Guanine nucleotide-binding protein-like 3 (561 aa).

The segment covering 28 to 46 has biased composition (basic residues); it reads HNRKLKKAAKKQGISRKAK. Disordered regions lie at residues 28–58 and 76–110; these read HNRK…APFK and KEQN…KKAK. Residues 53 to 98 adopt a coiled-coil conformation; the sequence is NSAPFKEEVLREAEQRKQELETLKEQNKIVKQQEKAAKRKKEKDAA. Positions 76 to 88 are enriched in basic and acidic residues; it reads KEQNKIVKQQEKA. The CP-type G domain occupies 133-319; sequence CQELNKVIEA…MIDSPGILAA (187 aa). GTP contacts are provided by residues 181 to 184, 268 to 275, and 312 to 315; these read NKID, GFPNVGKS, and DSPG. A disordered region spans residues 486–532; it reads ATTTDAEEEKMDTTTNTDEPEAESHISSTVEPIQEPTEKRKDKPAKE. A compositionally biased stretch (basic and acidic residues) spans 521-532; sequence PTEKRKDKPAKE.

Belongs to the TRAFAC class YlqF/YawG GTPase family.

The protein localises to the nucleus. It is found in the nucleolus. May play a role in regulating cellular proliferation. The protein is Guanine nucleotide-binding protein-like 3 (gnl3) of Danio rerio (Zebrafish).